Reading from the N-terminus, the 397-residue chain is MGCIKVISVFLAAIAAVDARAFFHNRGGNDVIPNSYIVVMKDGVTAEDFDSHISSVAATHSLNKAKRGSETVGHKDSFNINGWRAYNGHFDEATIESILKDDKVNYVEHDRVVKLAALTTQPNAPTWGLGRVSHKAPGNKDFVYDSSAGQGITIYGVDTGIDIRHPEFAGRIRWGTNTVDNDNTDGNGHGTHTAGTFAGTTYGVAKKANIVAVKVLSAGGSGSTSGVIKGIDWCVTDARSKNALGKAALNLSLGGSFSQASNDAVTRAQEAGIFVAVAAGNDNRDAKNSSPASAPAVCTAASSTIDDQKSSFSNWGTIVDIYAPGSNILSAAPGGGTRTLSGTSMASPHVCGVGAAMLAQGVSVAQACDRLKQIGNAVIRNPGTGTTNRLLYNGSGR.

Residues methionine 1 to alanine 19 form the signal peptide. A propeptide spanning residues arginine 20–alanine 116 is cleaved from the precursor. An Inhibitor I9 domain is found at serine 35–alanine 116. In terms of domain architecture, Peptidase S8 spans threonine 126 to arginine 397. Residues aspartate 158 and histidine 189 each act as charge relay system in the active site. An N-linked (GlcNAc...) asparagine glycan is attached at asparagine 250. Residue serine 344 is the Charge relay system of the active site. The N-linked (GlcNAc...) asparagine glycan is linked to asparagine 393.

Belongs to the peptidase S8 family.

It is found in the secreted. In terms of biological role, secreted subtilisin-like serine protease with keratinolytic activity that contributes to pathogenicity. The polypeptide is Subtilisin-like protease 3 (SUB3) (Arthroderma benhamiae (strain ATCC MYA-4681 / CBS 112371) (Trichophyton mentagrophytes)).